A 215-amino-acid polypeptide reads, in one-letter code: Probable transaldolase (215 aa).

Lysine 83 serves as the catalytic Schiff-base intermediate with substrate.

This sequence belongs to the transaldolase family. Type 3B subfamily.

The protein resides in the cytoplasm. The catalysed reaction is D-sedoheptulose 7-phosphate + D-glyceraldehyde 3-phosphate = D-erythrose 4-phosphate + beta-D-fructose 6-phosphate. It functions in the pathway carbohydrate degradation; pentose phosphate pathway; D-glyceraldehyde 3-phosphate and beta-D-fructose 6-phosphate from D-ribose 5-phosphate and D-xylulose 5-phosphate (non-oxidative stage): step 2/3. Its function is as follows. Transaldolase is important for the balance of metabolites in the pentose-phosphate pathway. In Desulforudis audaxviator (strain MP104C), this protein is Probable transaldolase.